The primary structure comprises 432 residues: Glutamate-1-semialdehyde 2,1-aminomutase (432 aa).

Residue K269 is modified to N6-(pyridoxal phosphate)lysine.

This sequence belongs to the class-III pyridoxal-phosphate-dependent aminotransferase family. HemL subfamily. Homodimer. The cofactor is pyridoxal 5'-phosphate.

The protein resides in the cytoplasm. The catalysed reaction is (S)-4-amino-5-oxopentanoate = 5-aminolevulinate. The protein operates within porphyrin-containing compound metabolism; protoporphyrin-IX biosynthesis; 5-aminolevulinate from L-glutamyl-tRNA(Glu): step 2/2. This is Glutamate-1-semialdehyde 2,1-aminomutase from Desulforudis audaxviator (strain MP104C).